The sequence spans 417 residues: Gamma-glutamyl phosphate reductase (417 aa).

It belongs to the gamma-glutamyl phosphate reductase family.

Its subcellular location is the cytoplasm. It catalyses the reaction L-glutamate 5-semialdehyde + phosphate + NADP(+) = L-glutamyl 5-phosphate + NADPH + H(+). It participates in amino-acid biosynthesis; L-proline biosynthesis; L-glutamate 5-semialdehyde from L-glutamate: step 2/2. In terms of biological role, catalyzes the NADPH-dependent reduction of L-glutamate 5-phosphate into L-glutamate 5-semialdehyde and phosphate. The product spontaneously undergoes cyclization to form 1-pyrroline-5-carboxylate. The polypeptide is Gamma-glutamyl phosphate reductase (Idiomarina loihiensis (strain ATCC BAA-735 / DSM 15497 / L2-TR)).